A 557-amino-acid chain; its full sequence is D-arabinono-1,4-lactone oxidase (557 aa).

Residues 25-209 (FLCKPQAIFQ…THVTLRTCPK (185 aa)) form the FAD-binding PCMH-type domain. FAD contacts are provided by residues 58–61 (VGSG), 62–63 (HS), 144–148 (ISTGT), I199, and 543–546 (LSGK). H62 carries the pros-8alpha-FAD histidine modification.

Belongs to the oxygen-dependent FAD-linked oxidoreductase family. FAD serves as cofactor.

The catalysed reaction is D-arabinono-1,4-lactone + O2 = dehydro-D-arabinono-1,4-lactone + H2O2 + H(+). It catalyses the reaction L-galactono-1,4-lactone + O2 = L-ascorbate + H2O2 + H(+). It carries out the reaction L-gulono-1,4-lactone + O2 = L-ascorbate + H2O2 + H(+). The enzyme catalyses L-xylono-1,4-lactone + O2 = dehydro-L-arabinono-1,4-lactone + H2O2 + H(+). It participates in cofactor biosynthesis; D-erythroascorbate biosynthesis; dehydro-D-arabinono-1,4-lactone from D-arabinose: step 2/2. Functionally, D-arabinono-1,4-lactone oxidase that catalyzes the final step of biosynthesis of D-erythroascorbic acid, an important antioxidant and one of the virulence factors enhancing the pathogenicity. Is also able to oxidize L-galactono-1,4-lactone, L-xylono-1,4-lactone and L-gulono-1,4-lactone. The chain is D-arabinono-1,4-lactone oxidase from Candida albicans (strain SC5314 / ATCC MYA-2876) (Yeast).